The sequence spans 436 residues: Trigger factor (436 aa).

Residues 163–248 (GDTVNIDFDG…VNEIKYKDVP (86 aa)) enclose the PPIase FKBP-type domain.

This sequence belongs to the FKBP-type PPIase family. Tig subfamily.

The protein localises to the cytoplasm. It carries out the reaction [protein]-peptidylproline (omega=180) = [protein]-peptidylproline (omega=0). In terms of biological role, involved in protein export. Acts as a chaperone by maintaining the newly synthesized protein in an open conformation. Functions as a peptidyl-prolyl cis-trans isomerase. This Staphylococcus saprophyticus subsp. saprophyticus (strain ATCC 15305 / DSM 20229 / NCIMB 8711 / NCTC 7292 / S-41) protein is Trigger factor.